The chain runs to 548 residues: Chaperonin GroEL (548 aa).

Residues 30–33, Lys-51, 87–91, Gly-415, 479–481, and Asp-495 each bind ATP; these read TLGP, DGTTT, and NAA.

This sequence belongs to the chaperonin (HSP60) family. In terms of assembly, forms a cylinder of 14 subunits composed of two heptameric rings stacked back-to-back. Interacts with the co-chaperonin GroES.

The protein resides in the cytoplasm. The catalysed reaction is ATP + H2O + a folded polypeptide = ADP + phosphate + an unfolded polypeptide.. In terms of biological role, together with its co-chaperonin GroES, plays an essential role in assisting protein folding. The GroEL-GroES system forms a nano-cage that allows encapsulation of the non-native substrate proteins and provides a physical environment optimized to promote and accelerate protein folding. The chain is Chaperonin GroEL from Lawsonia intracellularis (strain PHE/MN1-00).